The chain runs to 493 residues: BICD family-like cargo adapter 2 (493 aa).

Coiled-coil stretches lie at residues 56-275 and 365-431; these read ELGK…ELHM and MQHV…LLST.

The protein belongs to the BICDR family.

The sequence is that of BICD family-like cargo adapter 2 (bicdl2) from Xenopus laevis (African clawed frog).